The primary structure comprises 1534 residues: MDIYDTQTLGVMVFGGFMVVSAIGIFLVSTFSMKETSYEEALANQRKEMAKTHHQKVEKKKKEKTVEKKGKTKKKEEKPNGKIPDHEPAPNVTILLKDPVRAPAVPVAPTPVQPPVVIAPVATVPAMPQEKLAPSPKDKKKKEKKVAKVEPAVSSVVNSVQVLASKAAILETAPKEVPMVVVPPVGAKAGTPATSTAQGKKAEGAQNQSRKAEGAPNQGKKAEGALNQGKKAEGAQNQGKKVEVAPNQGKKAEGGQNQGKKVEGAQNQGKKAEGTPNQGKKAEGAPNQGKKTDGAPNQGKKSEGAPNQGKKAEGAQNQGKKVEVAPNQGKKAEGGQNQGKKVEGAQNQGKKAEGTPNQGKKAEGAPNQGKKTDGAPNQGKKSEGAPNQGKKVEGAQNQGKKVEGVQNQGKKAEGAQNQGKKAEGTSSQGRKEEGTPNLGKKAEGSPNQGKKVEVVQNQSKKVEGAPNQGKKAEGSQNQGKKTEGASNQGKKVDGAQNQGKKAEGAPNQGKKVEGAQNQGKKAEGTPNQGKKAEGAQNQGKKAEGAPNQGKKAEGAPNQGKKAEGAPNQGKKAEGAPNQGKKAEAAPNQGKKAEGAPNQGKKAEGAPNQGKKAEAAPNQGKKAEGAPNQGKKAEGAPNQGKKAEGAPNQGKKAEGAQNQGKKAEGAPNQGKKADLVANQGTKAEGVAGQGKKAEGAPNQGKKGEGTPNQGKKSEGSPNQGKKVDASANQSKRAESAPIQGKNADMVQSQEAPKQEAPAKKKSGSKKKGEPGPPDSDSPLYLPYKTLVSTVGSMVFNEGEAQRLIEILSEKAGVIQDTWHKATQKGDPVAILKRQLEEKEKLLATEQEDAAVAKSKLREVNKELAAEKAKAAAGEAKVKKQLVAREQEITAVQARIEASYREHVKEVQQLQGKIRTLQEQLENGPNTQLARLQQENSILRDALNQATSQVESKQNTELAKLRQELSKVSKELVEKSEAARQEEQQRKALETKTAALEKQVLQLQASHKESEEALQKRLDEVSRELCRSQTSHASLRADAEKAQEQQQQMAELHSKLQSSEAEVKSKSEELSGLHGQLKEARAENSQLMERIRSIEALLEAGQARDTQDAQASRAEHQARLKELESQVWCLEKEATELKEAVEQQKVKNNDLREKNWKAMEALASAERACEEKLRSLTQAKEESEKQLSLTEAQTKEALLALLPALSSSAPQSYTEWLQELREKGPELLKQRPADTDPSSDLASKLREAEETQNNLQAECDQYRTILAETEGMLKDLQKSVEEEEQVWKAKVSATEEELQKSRVTVKHLEDIVEKLKGELESSEQVREHTSHLEAELEKHMAAASAECQSYAKEVAGLRQLLLESQSQLDAAKSEAQKQSNELALVRQQLSEMKSHVEDGDVAGSPAAPPAEQDPVELKAQLERTEATLEDEQALRRKLTAEFQEAQSSACRLQAELEKLRSTGPLESSAAEEATQLKERLEKEKKLTSDLGHAATKLQELLKTTQEQLAKERDTVKKLQEQLDKTDDSSSKEGTSV.

Over 1–7 (MDIYDTQ) the chain is Lumenal. Residues 8-28 (TLGVMVFGGFMVVSAIGIFLV) traverse the membrane as a helical segment. Over 29 to 1534 (STFSMKETSY…DSSSKEGTSV (1506 aa)) the chain is Cytoplasmic. Disordered regions lie at residues 45 to 91 (QRKE…PAPN) and 125 to 152 (PAMP…VEPA). Over residues 52 to 63 (THHQKVEKKKKE) the composition is skewed to basic residues. The span at 64–88 (KTVEKKGKTKKKEEKPNGKIPDHEP) shows a compositional bias: basic and acidic residues. Residues 125 to 135 (PAMPQEKLAPS) show a composition bias toward low complexity. A Glycyl lysine isopeptide (Lys-Gly) (interchain with G-Cter in SUMO2) cross-link involves residue K148. 2 positions are modified to phosphoserine: S159 and S165. Disordered stretches follow at residues 173 to 780 (APKE…PLYL), 968 to 987 (KELV…RKAL), and 1021 to 1082 (RELC…RAEN). Residues 175-194 (KEVPMVVVPPVGAKAGTPAT) show a composition bias toward low complexity. 54 tandem repeats follow at residues 197-206 (AQGKKAEGAQ), 207-216 (NQSRKAEGAP), 217-226 (NQGKKAEGAL), 227-236 (NQGKKAEGAQ), 237-246 (NQGKKVEVAP), 247-256 (NQGKKAEGGQ), 257-266 (NQGKKVEGAQ), 267-276 (NQGKKAEGTP), 277-286 (NQGKKAEGAP), 287-296 (NQGKKTDGAP), 297-306 (NQGKKSEGAP), 307-316 (NQGKKAEGAQ), 317-326 (NQGKKVEVAP), 327-336 (NQGKKAEGGQ), 337-346 (NQGKKVEGAQ), 347-356 (NQGKKAEGTP), 357-366 (NQGKKAEGAP), 367-376 (NQGKKTDGAP), 377-386 (NQGKKSEGAP), 387-396 (NQGKKVEGAQ), 397-406 (NQGKKVEGVQ), 407-416 (NQGKKAEGAQ), 417-426 (NQGKKAEGTS), 427-436 (SQGRKEEGTP), 437-446 (NLGKKAEGSP), 447-456 (NQGKKVEVVQ), 457-466 (NQSKKVEGAP), 467-476 (NQGKKAEGSQ), 477-486 (NQGKKTEGAS), 487-496 (NQGKKVDGAQ), 497-506 (NQGKKAEGAP), 507-516 (NQGKKVEGAQ), 517-526 (NQGKKAEGTP), 527-536 (NQGKKAEGAQ), 537-546 (NQGKKAEGAP), 547-556 (NQGKKAEGAP), 557-566 (NQGKKAEGAP), 567-576 (NQGKKAEGAP), 577-586 (NQGKKAEAAP), 587-596 (NQGKKAEGAP), 597-606 (NQGKKAEGAP), 607-616 (NQGKKAEAAP), 617-626 (NQGKKAEGAP), 627-636 (NQGKKAEGAP), 637-646 (NQGKKAEGAP), 647-656 (NQGKKAEGAQ), 657-666 (NQGKKAEGAP), 667-676 (NQGKKADLVA), 677-686 (NQGTKAEGVA), 687-696 (GQGKKAEGAP), 697-706 (NQGKKGEGTP), 707-716 (NQGKKSEGSP), 717-726 (NQGKKVDASA), and 727-736 (NQSKRAESAP). The 54 X 10 AA tandem repeats of [NASG]-[QL]-[GS]-[KRT]-[KR]-[AVTSEG]-[ED]-[AGVLS]-[ATGSV]-[PQLSA] stretch occupies residues 197–736 (AQGKKAEGAQ…NQSKRAESAP (540 aa)). T275 is modified (phosphothreonine). Residues 395–428 (AQNQGKKVEGVQNQGKKAEGAQNQGKKAEGTSSQ) are compositionally biased toward polar residues. Residues 474–499 (GSQNQGKKTEGASNQGKKVDGAQNQG) show a composition bias toward polar residues. Residues 705-718 (TPNQGKKSEGSPNQ) are compositionally biased toward polar residues. S715 bears the Phosphoserine mark. S747 bears the Phosphoserine mark. K752 participates in a covalent cross-link: Glycyl lysine isopeptide (Lys-Gly) (interchain with G-Cter in SUMO1). S1032 carries the post-translational modification Phosphoserine. Basic and acidic residues predominate over residues 1059 to 1080 (AEVKSKSEELSGLHGQLKEARA). An N6-acetyllysine modification is found at K1064. Residues S1091 and S1110 each carry the phosphoserine modification. 3 disordered regions span residues 1224 to 1251 (ELLK…ETQN), 1391 to 1416 (KSHV…VELK), and 1509 to 1534 (ERDT…GTSV). Basic and acidic residues predominate over residues 1509–1528 (ERDTVKKLQEQLDKTDDSSS).

The protein resides in the endoplasmic reticulum membrane. Acts as a ribosome receptor and mediates interaction between the ribosome and the endoplasmic reticulum membrane. The protein is Ribosome-binding protein 1 (RRBP1) of Canis lupus familiaris (Dog).